The sequence spans 64 residues: Large ribosomal subunit protein uL30 (64 aa).

The protein belongs to the universal ribosomal protein uL30 family. Part of the 50S ribosomal subunit.

This chain is Large ribosomal subunit protein uL30, found in Rhodopseudomonas palustris (strain HaA2).